The primary structure comprises 276 residues: Mitochondrial outer membrane protein porin 2 (276 aa).

Ser76 is subject to Phosphoserine. Position 236 is a phosphothreonine (Thr236).

It belongs to the eukaryotic mitochondrial porin (TC 1.B.8.1) family. As to expression, expressed in root tips, steles, leaves, sepals, petals, stamen and pistils.

Its subcellular location is the mitochondrion outer membrane. Its function is as follows. Forms a channel through the mitochondrial outer membrane that allows diffusion of small hydrophilic molecules. The channel adopts an open conformation at low or zero membrane potential and a closed conformation at potentials above 30-40 mV. The open state has a weak anion selectivity whereas the closed state is cation-selective. Involved in plant growth and development at the vegetative and reproductive stages. Is important for leaf and pollen development and mitochondrial membrane potential steady state. May be involved in ABA-mediated early seedling development and disease resistance. This chain is Mitochondrial outer membrane protein porin 2 (VDAC2), found in Arabidopsis thaliana (Mouse-ear cress).